The sequence spans 220 residues: Fructose-6-phosphate aldolase 2 (220 aa).

K85 acts as the Schiff-base intermediate with substrate in catalysis.

The protein belongs to the transaldolase family. Type 3A subfamily. Homodecamer.

It is found in the cytoplasm. The catalysed reaction is beta-D-fructose 6-phosphate = dihydroxyacetone + D-glyceraldehyde 3-phosphate. Catalyzes the reversible formation of fructose 6-phosphate from dihydroxyacetone and D-glyceraldehyde 3-phosphate via an aldolization reaction. Can utilize hydroxyacetone as an alternative donor substrate. Is also able to catalyze the direct self-aldol addition of glycolaldehyde. Is less catalytically efficient than the isozyme FsaA. Does not display transaldolase activity. The chain is Fructose-6-phosphate aldolase 2 (fsaB) from Escherichia coli (strain K12).